We begin with the raw amino-acid sequence, 207 residues long: Large ribosomal subunit protein bL20 (207 aa).

The disordered stretch occupies residues 117–161 (QETQPQPEEKTSLQPEKVLSTELSEEKSDDTLETKPQTTQVKAKK). The span at 140-149 (SEEKSDDTLE) shows a compositional bias: basic and acidic residues.

Belongs to the bacterial ribosomal protein bL20 family.

Binds directly to 23S ribosomal RNA and is necessary for the in vitro assembly process of the 50S ribosomal subunit. It is not involved in the protein synthesizing functions of that subunit. The protein is Large ribosomal subunit protein bL20 of Onion yellows phytoplasma (strain OY-M).